The following is a 288-amino-acid chain: Pantothenate synthetase (288 aa).

30 to 37 (MGALHEGH) provides a ligand contact to ATP. The active-site Proton donor is His37. Residue Gln61 coordinates (R)-pantoate. Gln61 is a binding site for beta-alanine. An ATP-binding site is contributed by 147 to 150 (GEKD). Gln153 is a (R)-pantoate binding site. ATP is bound by residues Val176 and 184–187 (ISSR).

It belongs to the pantothenate synthetase family. As to quaternary structure, homodimer.

The protein localises to the cytoplasm. The catalysed reaction is (R)-pantoate + beta-alanine + ATP = (R)-pantothenate + AMP + diphosphate + H(+). The protein operates within cofactor biosynthesis; (R)-pantothenate biosynthesis; (R)-pantothenate from (R)-pantoate and beta-alanine: step 1/1. In terms of biological role, catalyzes the condensation of pantoate with beta-alanine in an ATP-dependent reaction via a pantoyl-adenylate intermediate. This Chlorobium phaeobacteroides (strain BS1) protein is Pantothenate synthetase.